The primary structure comprises 145 residues: 3-hydroxyacyl-[acyl-carrier-protein] dehydratase FabZ (145 aa).

H47 is a catalytic residue.

The protein belongs to the thioester dehydratase family. FabZ subfamily.

The protein resides in the cytoplasm. It carries out the reaction a (3R)-hydroxyacyl-[ACP] = a (2E)-enoyl-[ACP] + H2O. Involved in unsaturated fatty acids biosynthesis. Catalyzes the dehydration of short chain beta-hydroxyacyl-ACPs and long chain saturated and unsaturated beta-hydroxyacyl-ACPs. The chain is 3-hydroxyacyl-[acyl-carrier-protein] dehydratase FabZ from Thiobacillus denitrificans (strain ATCC 25259 / T1).